Reading from the N-terminus, the 784-residue chain is PWWP domain-containing protein 2A (784 aa).

Disordered regions lie at residues 1 to 32 (MAAV…LGRL), 244 to 272 (KPVE…PEDV), 463 to 567 (AKEK…EMQD), and 605 to 654 (SSSA…SSKE). The segment covering 244-266 (KPVESIQEESKSFHEEPLVKSEE) has biased composition (basic and acidic residues). A compositionally biased stretch (polar residues) spans 536–556 (TRYSATRSAGETPSEIQSPSN). Over residues 605-614 (SSSASVCSSD) the composition is skewed to low complexity. In terms of domain architecture, PWWP spans 684 to 744 (VGDIVWAKIY…LSQLTPFLEN (61 aa)).

It is found in the nucleus. H2A.Z-specific chromatin binding protein which plays an important role in the neural crest cell differentiation and/or migration during early development and is essential for the development of the head and eye. Acts as an adapter between distinct nucleosome components (H3K36me3 or H2A.Z) and chromatin-modifying complexes, contributing to the regulation of the levels of histone acetylation at actively transcribed genes. The polypeptide is PWWP domain-containing protein 2A (pwwp2a) (Xenopus tropicalis (Western clawed frog)).